Reading from the N-terminus, the 332-residue chain is Beta-ketoacyl-[acyl-carrier-protein] synthase III (332 aa).

Active-site residues include Cys-114 and His-255. Residues 256 to 260 form an ACP-binding region; the sequence is QANLR. Residue Asn-285 is part of the active site.

The protein belongs to the thiolase-like superfamily. FabH family. Homodimer.

It is found in the cytoplasm. The catalysed reaction is malonyl-[ACP] + acetyl-CoA + H(+) = 3-oxobutanoyl-[ACP] + CO2 + CoA. It functions in the pathway lipid metabolism; fatty acid biosynthesis. Catalyzes the condensation reaction of fatty acid synthesis by the addition to an acyl acceptor of two carbons from malonyl-ACP. Catalyzes the first condensation reaction which initiates fatty acid synthesis and may therefore play a role in governing the total rate of fatty acid production. Possesses both acetoacetyl-ACP synthase and acetyl transacylase activities. Its substrate specificity determines the biosynthesis of branched-chain and/or straight-chain of fatty acids. This chain is Beta-ketoacyl-[acyl-carrier-protein] synthase III, found in Sulfurimonas denitrificans (strain ATCC 33889 / DSM 1251) (Thiomicrospira denitrificans (strain ATCC 33889 / DSM 1251)).